A 70-amino-acid chain; its full sequence is UPF0270 protein VP2791 (70 aa).

Belongs to the UPF0270 family.

This Vibrio parahaemolyticus serotype O3:K6 (strain RIMD 2210633) protein is UPF0270 protein VP2791.